Consider the following 82-residue polypeptide: Small ribosomal subunit protein bS18 (82 aa).

Belongs to the bacterial ribosomal protein bS18 family. As to quaternary structure, part of the 30S ribosomal subunit. Forms a tight heterodimer with protein bS6.

In terms of biological role, binds as a heterodimer with protein bS6 to the central domain of the 16S rRNA, where it helps stabilize the platform of the 30S subunit. The polypeptide is Small ribosomal subunit protein bS18 (Sinorhizobium fredii (strain NBRC 101917 / NGR234)).